Consider the following 564-residue polypeptide: Asparagine synthetase domain-containing protein CG17486 (564 aa).

The Nucleophile role is filled by Cys-2. In terms of domain architecture, Glutamine amidotransferase type-2 spans 2–180; the sequence is CGIFCSVVNN…PLGLFRVKLN (179 aa). An Asparagine synthetase domain is found at 280–541; it reads PFCRLCMQKL…GLRDVVFLKK (262 aa).

The polypeptide is Asparagine synthetase domain-containing protein CG17486 (Drosophila melanogaster (Fruit fly)).